Here is a 199-residue protein sequence, read N- to C-terminus: NAD(P)H dehydrogenase (quinone) (199 aa).

One can recognise a Flavodoxin-like domain in the interval 4-190 (VLVLYYSAYG…EAAKYQGAHV (187 aa)). FMN is bound by residues 10–15 (SAYGHI) and 78–80 (TRF). An NAD(+)-binding site is contributed by Y12. A substrate-binding site is contributed by W98. FMN contacts are provided by residues 113–119 (SSATQHG) and H134.

Belongs to the WrbA family. Requires FMN as cofactor.

The catalysed reaction is a quinone + NADH + H(+) = a quinol + NAD(+). It carries out the reaction a quinone + NADPH + H(+) = a quinol + NADP(+). The polypeptide is NAD(P)H dehydrogenase (quinone) (Rhizobium rhizogenes (strain K84 / ATCC BAA-868) (Agrobacterium radiobacter)).